The primary structure comprises 253 residues: tRNA uridine(34) hydroxylase (253 aa).

A Rhodanese domain is found at 127–221 (HGRPLVLLDT…YFEDVGGEGY (95 aa)). Catalysis depends on Cys-181, which acts as the Cysteine persulfide intermediate.

This sequence belongs to the TrhO family.

It carries out the reaction uridine(34) in tRNA + AH2 + O2 = 5-hydroxyuridine(34) in tRNA + A + H2O. Functionally, catalyzes oxygen-dependent 5-hydroxyuridine (ho5U) modification at position 34 in tRNAs. The sequence is that of tRNA uridine(34) hydroxylase from Xanthomonas campestris pv. campestris (strain B100).